Reading from the N-terminus, the 314-residue chain is MPLDVVVVMDPITGIKIAKDTTFALLLEGQRRSHRLHYVHPGSLSLNEGRTFAQIAPLQVRDNKTDWYTLGEFSETQLGQGQIILMRKDPPVNAEFIYDTQLLSIAQAAGAQVINHPQGLRDLNEKLAAQLFPQCCPPTLISRDMRALKMFVQKQEQAILKPLDGMGGHSIFRSSNGDPNLNVILETLTDGGRTLAIAQRYLQQIIEGDKRILLIDGVPIDHCLARIPQGDEFRGNMAAGGRGESRPLNEHDRWIAAQVGPEMRRRGMRFVGIDVIGDYLTEINVTSPTCLRELDAQCGLNIAGQLFDAIETGG.

The ATP-grasp domain occupies 125-311 (EKLAAQLFPQ…IAGQLFDAIE (187 aa)). 151–208 (FVQKQEQAILKPLDGMGGHSIFRSSNGDPNLNVILETLTDGGRTLAIAQRYLQQIIEG) is a binding site for ATP. Mg(2+)-binding residues include Glu-282 and Asn-284.

This sequence belongs to the prokaryotic GSH synthase family. Mg(2+) is required as a cofactor. Requires Mn(2+) as cofactor.

The catalysed reaction is gamma-L-glutamyl-L-cysteine + glycine + ATP = glutathione + ADP + phosphate + H(+). It participates in sulfur metabolism; glutathione biosynthesis; glutathione from L-cysteine and L-glutamate: step 2/2. In Xylella fastidiosa (strain 9a5c), this protein is Glutathione synthetase.